We begin with the raw amino-acid sequence, 285 residues long: Protoheme IX farnesyltransferase (285 aa).

The next 8 helical transmembrane spans lie at 19 to 39, 40 to 60, 90 to 110, 111 to 131, 135 to 155, 165 to 185, 220 to 240, and 265 to 285; these read RIIW…GKLM, PLSI…SMII, AIYV…LDNP, LTSF…TVWL, SPLN…AGYA, SILL…ALAL, IPFA…VAGI, and FKFS…TRLI.

This sequence belongs to the UbiA prenyltransferase family. Protoheme IX farnesyltransferase subfamily.

The protein resides in the cell membrane. It catalyses the reaction heme b + (2E,6E)-farnesyl diphosphate + H2O = Fe(II)-heme o + diphosphate. Its pathway is porphyrin-containing compound metabolism; heme O biosynthesis; heme O from protoheme: step 1/1. Functionally, converts heme B (protoheme IX) to heme O by substitution of the vinyl group on carbon 2 of heme B porphyrin ring with a hydroxyethyl farnesyl side group. The polypeptide is Protoheme IX farnesyltransferase (Metallosphaera sedula (strain ATCC 51363 / DSM 5348 / JCM 9185 / NBRC 15509 / TH2)).